Reading from the N-terminus, the 103-residue chain is N(4)-acetylcytidine amidohydrolase (103 aa).

An ASCH domain is found at 6-94; sequence ITFFQRFQND…IAEIYPNQTQ (89 aa). Lys-21 functions as the Proton acceptor in the catalytic mechanism. Thr-24 acts as the Nucleophile in catalysis. Residue Glu-74 is the Proton donor of the active site.

The protein belongs to the N(4)-acetylcytidine amidohydrolase family.

The catalysed reaction is N(4)-acetylcytidine + H2O = cytidine + acetate + H(+). The enzyme catalyses N(4)-acetyl-2'-deoxycytidine + H2O = 2'-deoxycytidine + acetate + H(+). It catalyses the reaction N(4)-acetylcytosine + H2O = cytosine + acetate + H(+). Functionally, catalyzes the hydrolysis of N(4)-acetylcytidine (ac4C). The polypeptide is N(4)-acetylcytidine amidohydrolase (yqfB) (Salmonella schwarzengrund (strain CVM19633)).